We begin with the raw amino-acid sequence, 192 residues long: Hydrophobin-like protein rodD (192 aa).

Intrachain disulfides connect cysteine 45–cysteine 106, cysteine 50–cysteine 99, and cysteine 107–cysteine 112.

The protein belongs to the fungal hydrophobin family. Self-assembles to form functional amyloid fibrils called rodlets. Self-assembly into fibrillar rodlets occurs spontaneously at hydrophobic:hydrophilic interfaces and the rodlets further associate laterally to form amphipathic monolayers.

In terms of biological role, aerial growth, conidiation, and dispersal of filamentous fungi in the environment rely upon a capability of their secreting small amphipathic proteins called hydrophobins (HPBs) with low sequence identity. Class I can self-assemble into an outermost layer of rodlet bundles on aerial cell surfaces, conferring cellular hydrophobicity that supports fungal growth, development and dispersal; whereas Class II form highly ordered films at water-air interfaces through intermolecular interactions but contribute nothing to the rodlet structure. RodD is a an hydrophobin-like protein that, unlike rodA, is not required for rodlet formation. The sequence is that of Hydrophobin-like protein rodD from Aspergillus fumigatus (strain ATCC MYA-4609 / CBS 101355 / FGSC A1100 / Af293) (Neosartorya fumigata).